Here is a 345-residue protein sequence, read N- to C-terminus: Hemin transport protein HmuS (345 aa).

To Y.enterocolitica HemS.

In terms of biological role, part of the binding-protein-dependent transport system for hemin. The chain is Hemin transport protein HmuS (hmuS) from Yersinia pestis.